Consider the following 268-residue polypeptide: Protein APE_1980.1 (268 aa).

This sequence belongs to the CinA family.

In Aeropyrum pernix (strain ATCC 700893 / DSM 11879 / JCM 9820 / NBRC 100138 / K1), this protein is Protein APE_1980.1.